Reading from the N-terminus, the 734-residue chain is Photosystem I P700 chlorophyll a apoprotein A2 (734 aa).

Transmembrane regions (helical) follow at residues 46–69 (IFAS…FHVA), 135–158 (LYTG…LHLQ), 175–199 (LNHH…HVAI), 273–291 (IAHH…GHMY), 330–353 (IHFQ…QHMY), 369–395 (AALY…IFFI), 417–439 (AIIS…LYVH), and 517–535 (FLVH…LILV). Cysteine 559 and cysteine 568 together coordinate [4Fe-4S] cluster. 2 consecutive transmembrane segments (helical) span residues 575–596 (AFYL…YWHW) and 643–665 (LSVW…MFLI). Residues histidine 654, methionine 662, and tyrosine 670 each contribute to the chlorophyll a site. Tryptophan 671 contributes to the phylloquinone binding site. Residues 707-727 (LVGLAHFSVGYIFTYAAFLIA) traverse the membrane as a helical segment.

Belongs to the PsaA/PsaB family. In terms of assembly, the PsaA/B heterodimer binds the P700 chlorophyll special pair and subsequent electron acceptors. PSI consists of a core antenna complex that captures photons, and an electron transfer chain that converts photonic excitation into a charge separation. The eukaryotic PSI reaction center is composed of at least 11 subunits. P700 is a chlorophyll a/chlorophyll a' dimer, A0 is one or more chlorophyll a, A1 is one or both phylloquinones and FX is a shared 4Fe-4S iron-sulfur center. is required as a cofactor.

The protein localises to the plastid. It is found in the chloroplast thylakoid membrane. It catalyses the reaction reduced [plastocyanin] + hnu + oxidized [2Fe-2S]-[ferredoxin] = oxidized [plastocyanin] + reduced [2Fe-2S]-[ferredoxin]. In terms of biological role, psaA and PsaB bind P700, the primary electron donor of photosystem I (PSI), as well as the electron acceptors A0, A1 and FX. PSI is a plastocyanin-ferredoxin oxidoreductase, converting photonic excitation into a charge separation, which transfers an electron from the donor P700 chlorophyll pair to the spectroscopically characterized acceptors A0, A1, FX, FA and FB in turn. Oxidized P700 is reduced on the lumenal side of the thylakoid membrane by plastocyanin. This Agrostis stolonifera (Creeping bentgrass) protein is Photosystem I P700 chlorophyll a apoprotein A2.